Reading from the N-terminus, the 232-residue chain is Large ribosomal subunit protein uL1 (232 aa).

This sequence belongs to the universal ribosomal protein uL1 family. In terms of assembly, part of the 50S ribosomal subunit.

Functionally, binds directly to 23S rRNA. The L1 stalk is quite mobile in the ribosome, and is involved in E site tRNA release. Its function is as follows. Protein L1 is also a translational repressor protein, it controls the translation of the L11 operon by binding to its mRNA. In Ruegeria sp. (strain TM1040) (Silicibacter sp.), this protein is Large ribosomal subunit protein uL1.